The chain runs to 122 residues: Large ribosomal subunit protein uL14 (122 aa).

Belongs to the universal ribosomal protein uL14 family. As to quaternary structure, part of the 50S ribosomal subunit. Forms a cluster with proteins L3 and L19. In the 70S ribosome, L14 and L19 interact and together make contacts with the 16S rRNA in bridges B5 and B8.

Functionally, binds to 23S rRNA. Forms part of two intersubunit bridges in the 70S ribosome. This Gluconacetobacter diazotrophicus (strain ATCC 49037 / DSM 5601 / CCUG 37298 / CIP 103539 / LMG 7603 / PAl5) protein is Large ribosomal subunit protein uL14.